Consider the following 358-residue polypeptide: Alanine racemase (358 aa).

The active-site Proton acceptor; specific for D-alanine is the Lys-35. Lys-35 carries the post-translational modification N6-(pyridoxal phosphate)lysine. Arg-130 serves as a coordination point for substrate. Tyr-255 functions as the Proton acceptor; specific for L-alanine in the catalytic mechanism. A substrate-binding site is contributed by Met-303.

The protein belongs to the alanine racemase family. It depends on pyridoxal 5'-phosphate as a cofactor.

It carries out the reaction L-alanine = D-alanine. It functions in the pathway amino-acid biosynthesis; D-alanine biosynthesis; D-alanine from L-alanine: step 1/1. Catalyzes the interconversion of L-alanine and D-alanine. May also act on other amino acids. The chain is Alanine racemase (alr) from Shewanella putrefaciens (strain CN-32 / ATCC BAA-453).